Consider the following 65-residue polypeptide: Large ribosomal subunit protein uL29 (65 aa).

Belongs to the universal ribosomal protein uL29 family.

The sequence is that of Large ribosomal subunit protein uL29 from Leptothrix cholodnii (strain ATCC 51168 / LMG 8142 / SP-6) (Leptothrix discophora (strain SP-6)).